Here is a 361-residue protein sequence, read N- to C-terminus: Phospho-N-acetylmuramoyl-pentapeptide-transferase (361 aa).

10 consecutive transmembrane segments (helical) span residues 28-48 (LAVL…IKFL), 74-94 (TMGG…LADL), 99-119 (IWIT…DDYA), 135-155 (LLLQ…TIDS), 167-187 (SLSM…IVGA), 203-223 (VPIA…GNLI), 236-256 (TGEL…FLWF), 263-283 (VFMG…ISVI), 288-308 (IVLG…IMQV), and 338-358 (KVVI…LSSL).

This sequence belongs to the glycosyltransferase 4 family. MraY subfamily. Requires Mg(2+) as cofactor.

It is found in the cell inner membrane. It carries out the reaction UDP-N-acetyl-alpha-D-muramoyl-L-alanyl-gamma-D-glutamyl-meso-2,6-diaminopimeloyl-D-alanyl-D-alanine + di-trans,octa-cis-undecaprenyl phosphate = di-trans,octa-cis-undecaprenyl diphospho-N-acetyl-alpha-D-muramoyl-L-alanyl-D-glutamyl-meso-2,6-diaminopimeloyl-D-alanyl-D-alanine + UMP. The protein operates within cell wall biogenesis; peptidoglycan biosynthesis. In terms of biological role, catalyzes the initial step of the lipid cycle reactions in the biosynthesis of the cell wall peptidoglycan: transfers peptidoglycan precursor phospho-MurNAc-pentapeptide from UDP-MurNAc-pentapeptide onto the lipid carrier undecaprenyl phosphate, yielding undecaprenyl-pyrophosphoryl-MurNAc-pentapeptide, known as lipid I. This chain is Phospho-N-acetylmuramoyl-pentapeptide-transferase, found in Rickettsia bellii (strain OSU 85-389).